The chain runs to 155 residues: MRRRRAVKREVAPDPIYNDVLVTKLINRVMKDGKKSKAEKIVYKALEMLSEKTKQPPMEAFKKAINNVKPLLEVRPRRVGGATYQIPFEVPEDRALSLALRWIVAAARAKSGRPTSERLALELIDAYNGTGVAVKKREDVHRMAEAGKAYAHFRW.

Belongs to the universal ribosomal protein uS7 family. As to quaternary structure, part of the 30S ribosomal subunit. Contacts proteins S9 and S11.

In terms of biological role, one of the primary rRNA binding proteins, it binds directly to 16S rRNA where it nucleates assembly of the head domain of the 30S subunit. Is located at the subunit interface close to the decoding center, probably blocks exit of the E-site tRNA. The polypeptide is Small ribosomal subunit protein uS7 (Kosmotoga olearia (strain ATCC BAA-1733 / DSM 21960 / TBF 19.5.1)).